The following is a 685-amino-acid chain: Methionine--tRNA ligase (685 aa).

The 'HIGH' region motif lies at 12–22 (PYANGSIHLGH). Zn(2+) contacts are provided by C143, C146, C156, and C159. The short motif at 339–343 (KMSKS) is the 'KMSKS' region element. K342 contributes to the ATP binding site. Positions 582 to 685 (DFMKIDMRVA…AGAQPGDKVG (104 aa)) constitute a tRNA-binding domain.

It belongs to the class-I aminoacyl-tRNA synthetase family. MetG type 1 subfamily. As to quaternary structure, homodimer. Zn(2+) serves as cofactor.

Its subcellular location is the cytoplasm. It carries out the reaction tRNA(Met) + L-methionine + ATP = L-methionyl-tRNA(Met) + AMP + diphosphate. Is required not only for elongation of protein synthesis but also for the initiation of all mRNA translation through initiator tRNA(fMet) aminoacylation. This is Methionine--tRNA ligase from Neisseria meningitidis serogroup C (strain 053442).